A 426-amino-acid polypeptide reads, in one-letter code: Histidine--tRNA ligase (426 aa).

This sequence belongs to the class-II aminoacyl-tRNA synthetase family. Homodimer.

It is found in the cytoplasm. It catalyses the reaction tRNA(His) + L-histidine + ATP = L-histidyl-tRNA(His) + AMP + diphosphate + H(+). The chain is Histidine--tRNA ligase from Streptococcus pyogenes serotype M1.